A 186-amino-acid chain; its full sequence is Holliday junction branch migration complex subunit RuvA (186 aa).

The tract at residues 1 to 61 is domain I; sequence MYSYIKGKVV…ENLQILYGFN (61 aa). The domain II stretch occupies residues 62-134; the sequence is DNKNLLFFKK…LKGDLIFSEK (73 aa). The tract at residues 134–135 is flexible linker; sequence KI. Positions 136–186 are domain III; that stretch reads ILNPKKTELEKILLNLGFVKKEIKSVLNQIDDKKELELMLKEVLLKLAKNI.

It belongs to the RuvA family. Homotetramer. Forms an RuvA(8)-RuvB(12)-Holliday junction (HJ) complex. HJ DNA is sandwiched between 2 RuvA tetramers; dsDNA enters through RuvA and exits via RuvB. An RuvB hexamer assembles on each DNA strand where it exits the tetramer. Each RuvB hexamer is contacted by two RuvA subunits (via domain III) on 2 adjacent RuvB subunits; this complex drives branch migration. In the full resolvosome a probable DNA-RuvA(4)-RuvB(12)-RuvC(2) complex forms which resolves the HJ.

The protein resides in the cytoplasm. In terms of biological role, the RuvA-RuvB-RuvC complex processes Holliday junction (HJ) DNA during genetic recombination and DNA repair, while the RuvA-RuvB complex plays an important role in the rescue of blocked DNA replication forks via replication fork reversal (RFR). RuvA specifically binds to HJ cruciform DNA, conferring on it an open structure. The RuvB hexamer acts as an ATP-dependent pump, pulling dsDNA into and through the RuvAB complex. HJ branch migration allows RuvC to scan DNA until it finds its consensus sequence, where it cleaves and resolves the cruciform DNA. This is Holliday junction branch migration complex subunit RuvA from Phytoplasma mali (strain AT).